A 286-amino-acid chain; its full sequence is Deleted in azoospermia-like-B (286 aa).

The RRM domain maps to N33–V114. In terms of domain architecture, DAZ spans A155–Q180.

This sequence belongs to the RRM DAZ family. As to quaternary structure, interacts with the C-terminus of pabp1 and with epabp. Prior to oocyte maturation, found in a complex with epabp and pum2 proteins and spdy1 mRNA; pum2 dissociates from the complex during maturation.

Its subcellular location is the cytoplasm. RNA-binding protein that is required for primordial germ cell (PGC) differentiation and indirectly necessary for the migration of PGCs through the endoderm. May promote meiotic cell division during spermatogenesis. Shows a preference for G- and U-rich RNAs and probably binds the 3'-UTR of target mRNAs. Stimulates the initiation of translation of mRNAs through the recruitment of poly(A)-binding proteins (PABPs). The sequence is that of Deleted in azoospermia-like-B (dazl-b) from Xenopus laevis (African clawed frog).